The following is a 635-amino-acid chain: Phosphatidylserine decarboxylase proenzyme 2 (635 aa).

One can recognise a C2 domain in the interval 20-146 (KLQKFRIHRR…VVQEPESTCK (127 aa)). 2 consecutive EF-hand domains span residues 174–209 (TERRFAKRILSIVDYNEDGQLSFSEFSDLIKAFGNL) and 210–245 (VAANKKEELFKAADLNGDGVVTIDELAALLALQQEQ). Residues aspartate 187, asparagine 189, aspartate 191, glutamine 193, glutamate 198, aspartate 223, asparagine 225, aspartate 227, and glutamate 234 each contribute to the Ca(2+) site. Catalysis depends on charge relay system; for autoendoproteolytic cleavage activity residues aspartate 443, histidine 499, and serine 587. Catalysis depends on serine 587, which acts as the Schiff-base intermediate with substrate; via pyruvic acid; for decarboxylase activity. Serine 587 bears the Pyruvic acid (Ser); by autocatalysis mark.

This sequence belongs to the phosphatidylserine decarboxylase family. PSD-B subfamily. Eukaryotic type II sub-subfamily. As to quaternary structure, heterodimer of a large membrane-associated beta subunit and a small pyruvoyl-containing alpha subunit. The cofactor is pyruvate. In terms of processing, is synthesized initially as an inactive proenzyme. Formation of the active enzyme involves a self-maturation process in which the active site pyruvoyl group is generated from an internal serine residue via an autocatalytic post-translational modification. Two non-identical subunits are generated from the proenzyme in this reaction, and the pyruvate is formed at the N-terminus of the alpha chain, which is derived from the carboxyl end of the proenzyme. The autoendoproteolytic cleavage occurs by a canonical serine protease mechanism, in which the side chain hydroxyl group of the serine supplies its oxygen atom to form the C-terminus of the beta chain, while the remainder of the serine residue undergoes an oxidative deamination to produce ammonia and the pyruvoyl prosthetic group on the alpha chain. During this reaction, the Ser that is part of the protease active site of the proenzyme becomes the pyruvoyl prosthetic group, which constitutes an essential element of the active site of the mature decarboxylase. In terms of tissue distribution, highly expressed in flowers and at lower levels in leaves.

The protein localises to the vacuole membrane. The enzyme catalyses a 1,2-diacyl-sn-glycero-3-phospho-L-serine + H(+) = a 1,2-diacyl-sn-glycero-3-phosphoethanolamine + CO2. The protein operates within phospholipid metabolism; phosphatidylethanolamine biosynthesis; phosphatidylethanolamine from CDP-diacylglycerol: step 2/2. Its function is as follows. Catalyzes the formation of phosphatidylethanolamine (PtdEtn) from phosphatidylserine (PtdSer). Plays a central role in phospholipid metabolism and in the interorganelle trafficking of phosphatidylserine. Contributes only to a minor proportion of PtdEtn production. This Arabidopsis thaliana (Mouse-ear cress) protein is Phosphatidylserine decarboxylase proenzyme 2 (PSD2).